The primary structure comprises 109 residues: Meiotically up-regulated gene 153 protein (109 aa).

The protein localises to the mitochondrion. Has a role in meiosis. The protein is Meiotically up-regulated gene 153 protein (mug153) of Schizosaccharomyces pombe (strain 972 / ATCC 24843) (Fission yeast).